Here is an 86-residue protein sequence, read N- to C-terminus: Large ribosomal subunit protein bL27 (86 aa).

Residues M1 to T10 are compositionally biased toward gly residues. The segment at M1–L21 is disordered.

This sequence belongs to the bacterial ribosomal protein bL27 family.

The polypeptide is Large ribosomal subunit protein bL27 (Cupriavidus pinatubonensis (strain JMP 134 / LMG 1197) (Cupriavidus necator (strain JMP 134))).